The chain runs to 213 residues: Transcription antitermination protein NusB (213 aa).

This sequence belongs to the NusB family.

Its function is as follows. Involved in transcription antitermination. Required for transcription of ribosomal RNA (rRNA) genes. Binds specifically to the boxA antiterminator sequence of the ribosomal RNA (rrn) operons. The sequence is that of Transcription antitermination protein NusB from Picosynechococcus sp. (strain ATCC 27264 / PCC 7002 / PR-6) (Agmenellum quadruplicatum).